A 413-amino-acid polypeptide reads, in one-letter code: Aspartate kinase (413 aa).

ACT domains are found at residues 267-341 (LTIR…GDTK) and 347-413 (IVGV…RQGE).

It belongs to the aspartokinase family. As to quaternary structure, homotrimer. In the presence of inhibitory amino acids the Stokes radius of the protein increases, suggesting its oligomeric state may change.

The protein resides in the cytoplasm. The enzyme catalyses L-aspartate + ATP = 4-phospho-L-aspartate + ADP. Its pathway is amino-acid biosynthesis; L-lysine biosynthesis via DAP pathway; (S)-tetrahydrodipicolinate from L-aspartate: step 1/4. The protein operates within amino-acid biosynthesis; L-methionine biosynthesis via de novo pathway; L-homoserine from L-aspartate: step 1/3. It functions in the pathway amino-acid biosynthesis; L-threonine biosynthesis; L-threonine from L-aspartate: step 1/5. With respect to regulation, activated by L-lysine, L-methionine, and L-isoleucine. L-threonine, at low concentrations, is a mild activator and has a weak inhibitory effect only at concentrations over 10 mM. Strongly feedback inhibited by the concerted combination of L-lysine and L-threonine and slightly feedback inhibited by the concerted combination of L-threonine and L-methionine. Activated by the combination of L-methionine and L-lysine, L-methionine and L-isoleucine and L-lysine and L-isoleucine. Functionally, involved in the biosynthesis of L-aspartate-beta-semialdehyde which is a central intermediate in the biosynthesis of different amino acids (L-lysine, L-methionine, L-threonine). Catalyzes the phosphorylation of the beta-carboxyl group of L-aspartate to yield 4-phospho-L-aspartate. The chain is Aspartate kinase from Pseudomonas fluorescens (strain SBW25).